An 86-amino-acid polypeptide reads, in one-letter code: YcgL domain-containing protein XOO0428 (86 aa).

Residues 1-83 form the YcgL domain; that stretch reads MHAYVYKSQR…PKTRVLAGEC (83 aa).

In Xanthomonas oryzae pv. oryzae (strain MAFF 311018), this protein is YcgL domain-containing protein XOO0428.